The chain runs to 950 residues: Protocadherin alpha-13 (950 aa).

The signal sequence occupies residues 1 to 29; it reads MLSSWQGGPRPRQLLLWLLILAAWETGSG. Residues 30–697 lie on the Extracellular side of the membrane; it reads QLHYSVPEEA…GPEAALVDVN (668 aa). Cadherin domains lie at 34–133, 134–242, 243–350, 351–455, 456–565, and 581–678; these read SVPE…PPIF, PESK…APEF, YQSV…APEV, TITS…APAF, AQPE…APAL, and MPRS…APQA. N-linked (GlcNAc...) asparagine glycosylation is found at N257 and N265. N-linked (GlcNAc...) asparagine glycosylation occurs at N548. The helical transmembrane segment at 698–718 threads the bilayer; that stretch reads VYLIIAICAVSSLLVLTLLLY. The Cytoplasmic segment spans residues 719-950; that stretch reads TALRCSAPPT…GNSTTDNSDQ (232 aa). PXXP repeat units lie at residues 734–737, 774–777, 799–802, 832–835, 873–876, and 891–894; these read PGKP, PSLP, PRQP, PGGP, PGNP, and PGSP. The segment at 734–894 is 6 X 4 AA repeats of P-X-X-P; it reads PGKPTLVCSS…PDKFIIPGSP (161 aa). Disordered regions lie at residues 774-808 and 827-950; these read PSLPPCLGSAEGTGQREEDSEGLKEPRQPNPDWRY and ILRA…NSDQ. Residues 787-800 are compositionally biased toward basic and acidic residues; sequence GQREEDSEGLKEPR. A compositionally biased stretch (basic and acidic residues) spans 909 to 923; sequence DKSDFITFGKKEETK.

It is found in the cell membrane. Potential calcium-dependent cell-adhesion protein. May be involved in the establishment and maintenance of specific neuronal connections in the brain. This is Protocadherin alpha-13 (PCDHA13) from Pan troglodytes (Chimpanzee).